The chain runs to 376 residues: Glutamate 5-kinase (376 aa).

An ATP-binding site is contributed by lysine 10. Residues serine 50, aspartate 137, and asparagine 149 each coordinate substrate. 169 to 170 (TD) contacts ATP. Residues 275–353 (RGRLVLDAGA…AEIAGVLGFM (79 aa)) form the PUA domain.

It belongs to the glutamate 5-kinase family.

The protein resides in the cytoplasm. It carries out the reaction L-glutamate + ATP = L-glutamyl 5-phosphate + ADP. It functions in the pathway amino-acid biosynthesis; L-proline biosynthesis; L-glutamate 5-semialdehyde from L-glutamate: step 1/2. Its function is as follows. Catalyzes the transfer of a phosphate group to glutamate to form L-glutamate 5-phosphate. The protein is Glutamate 5-kinase of Alcanivorax borkumensis (strain ATCC 700651 / DSM 11573 / NCIMB 13689 / SK2).